The sequence spans 932 residues: F-box protein COS111 (932 aa).

The interval 29-63 is disordered; that stretch reads VSAKHRPSSTGVYGHDASTVDHASRSNNNLNLTRS. Residues 53–63 are compositionally biased toward low complexity; the sequence is RSNNNLNLTRS. Residues 146-193 form the F-box domain; sequence RKEISDLPDEVLRNILSNVKDDQRTLVNCLYVNKAFYNATKPTLYERP. Polar residues predominate over residues 346 to 358; the sequence is LSEGKSSDNGNNG. Disordered stretches follow at residues 346–369, 389–450, 470–500, and 863–893; these read LSEGKSSDNGNNGKRQRSNSSVSS, TLSG…SNWF, ISSKKDEQQNEESAQTAQKIETPIIKRTEPF, and SVLPEDVPEDNNADDTNNGENTIAQPFSNDP. Low complexity-rich tracts occupy residues 395–431 and 438–447; these read NNSSKTQSKGKSSSSPGNPNDSSGEQDSIISSSSQID and TSSKSTSSTS. Residues 876-890 are compositionally biased toward polar residues; the sequence is DDTNNGENTIAQPFS.

Its function is as follows. F-box protein probably involved in ubiquitin conjugation pathway. This Candida glabrata (strain ATCC 2001 / BCRC 20586 / JCM 3761 / NBRC 0622 / NRRL Y-65 / CBS 138) (Yeast) protein is F-box protein COS111 (COS111).